Consider the following 286-residue polypeptide: Putative short-chain type dehydrogenase/reductase Rv0148 (286 aa).

11 to 35 contacts NAD(+); the sequence is VTGAGGGLGREYALTLAGEGASVVV. Position 151 (Ser151) interacts with substrate. Catalysis depends on Tyr164, which acts as the Proton acceptor. Residue Lys280 forms an Isoglutamyl lysine isopeptide (Lys-Gln) (interchain with Q-Cter in protein Pup) linkage.

This sequence belongs to the short-chain dehydrogenases/reductases (SDR) family. Post-translationally, pupylated at Lys-280 by the prokaryotic ubiquitin-like protein Pup, which probably leads to its degradation by the proteasome.

In Mycobacterium tuberculosis (strain ATCC 25618 / H37Rv), this protein is Putative short-chain type dehydrogenase/reductase Rv0148.